The following is a 413-amino-acid chain: Serine hydroxymethyltransferase (413 aa).

(6S)-5,6,7,8-tetrahydrofolate is bound by residues leucine 119 and 123–125; that span reads GHL. Position 228 is an N6-(pyridoxal phosphate)lysine (lysine 228). Glutamate 243 is a binding site for (6S)-5,6,7,8-tetrahydrofolate.

This sequence belongs to the SHMT family. As to quaternary structure, homodimer. The cofactor is pyridoxal 5'-phosphate.

It localises to the cytoplasm. The catalysed reaction is (6R)-5,10-methylene-5,6,7,8-tetrahydrofolate + glycine + H2O = (6S)-5,6,7,8-tetrahydrofolate + L-serine. It participates in one-carbon metabolism; tetrahydrofolate interconversion. It functions in the pathway amino-acid biosynthesis; glycine biosynthesis; glycine from L-serine: step 1/1. In terms of biological role, catalyzes the reversible interconversion of serine and glycine with tetrahydrofolate (THF) serving as the one-carbon carrier. This reaction serves as the major source of one-carbon groups required for the biosynthesis of purines, thymidylate, methionine, and other important biomolecules. Also exhibits THF-independent aldolase activity toward beta-hydroxyamino acids, producing glycine and aldehydes, via a retro-aldol mechanism. This Desulforamulus reducens (strain ATCC BAA-1160 / DSM 100696 / MI-1) (Desulfotomaculum reducens) protein is Serine hydroxymethyltransferase.